Reading from the N-terminus, the 2055-residue chain is Dedicator of cytokinesis protein 9 (2055 aa).

Phosphoserine occurs at positions 178 and 181. The 108-residue stretch at 185-292 (GITKHGWLYK…WVTVLNKILQ (108 aa)) folds into the PH domain. The disordered stretch occupies residues 301–326 (EKRNGDPHEDDEQSKLEGSGSGLDSY). Phosphoserine occurs at positions 444 and 453. Positions 649–827 (SNHLYVYPKY…PLLKISTHLV (179 aa)) constitute a C2 DOCK-type domain. Residues S936 and S1244 each carry the phosphoserine modification. Residue T1250 is modified to Phosphothreonine. Positions 1253-1291 (INSVRNADSRGSLISTDSGNSLPDRNPEKSNSLDKQQQS) are disordered. A phosphoserine mark is found at S1264, S1270, and S1273. Over residues 1264–1276 (SLISTDSGNSLPD) the composition is skewed to polar residues. The DOCKER domain occupies 1614 to 2055 (KSYASTPELR…LSDIMREQMG (442 aa)). Positions 1679 to 2055 (DEEASMMEDV…LSDIMREQMG (377 aa)) are interaction with CDC42.

The protein belongs to the DOCK family. As to quaternary structure, homodimer. Interacts preferentially with nucleotide-depleted CDC42. In terms of tissue distribution, expressed in lung. Also detected in Peyers patches, thymus, brain and lymph nodes. Expressed in Purkinje cells.

Its subcellular location is the endomembrane system. Guanine nucleotide-exchange factor (GEF) that activates CDC42 by exchanging bound GDP for free GTP. Overexpression induces filopodia formation. This is Dedicator of cytokinesis protein 9 from Mus musculus (Mouse).